A 48-amino-acid polypeptide reads, in one-letter code: Large ribosomal subunit protein bL32 (48 aa).

Residues methionine 1–tyrosine 20 show a composition bias toward basic residues. The disordered stretch occupies residues methionine 1–tyrosine 48.

Belongs to the bacterial ribosomal protein bL32 family.

This is Large ribosomal subunit protein bL32 from Campylobacter hominis (strain ATCC BAA-381 / DSM 21671 / CCUG 45161 / LMG 19568 / NCTC 13146 / CH001A).